A 132-amino-acid chain; its full sequence is Small ribosomal subunit protein uS11 (132 aa).

It belongs to the universal ribosomal protein uS11 family. Part of the 30S ribosomal subunit. Interacts with proteins S7 and S18. Binds to IF-3.

Its function is as follows. Located on the platform of the 30S subunit, it bridges several disparate RNA helices of the 16S rRNA. Forms part of the Shine-Dalgarno cleft in the 70S ribosome. This Legionella pneumophila (strain Paris) protein is Small ribosomal subunit protein uS11.